A 513-amino-acid polypeptide reads, in one-letter code: Probable tubulin polyglutamylase ttll-15 (513 aa).

One can recognise a TTL domain in the interval 73–411; sequence VTGSYESAHT…STPITKEADI (339 aa). ATP is bound by residues 216 to 219, K229, and D231; that span reads QKFV.

It belongs to the tubulin--tyrosine ligase family. As to expression, expressed in hypodermis and pharyngeal muscles.

Probable polyglutamylase that forms polyglutamate side chains on tubulin. Probably acts when complexed with other proteins. Appears to be dispensable for polar spindle formation in dividing embryonic cells, for cilia-dependent osmotic avoidance and for male mating behavior. Regulates microtubule dynamics in uterine muscle cells. The chain is Probable tubulin polyglutamylase ttll-15 from Caenorhabditis elegans.